The following is a 752-amino-acid chain: uncharacterized protein (752 aa).

Ser-202 and Ser-582 each carry phosphoserine. The interval 596–752 (EEEKESVEVE…KTGEDGEIVL (157 aa)) is disordered. Composition is skewed to basic and acidic residues over residues 601–613 (SVEVEEGKHKNDL) and 641–677 (LKSEDDNTSEASKDPSSHVKSPENIEKLKQNDDHFEV). A compositionally biased stretch (polar residues) spans 695–718 (NNVAETILEVTSSPKSSENSQKQS). Residues Ser-707 and Ser-738 each carry the phosphoserine modification.

This is an uncharacterized protein from Schizosaccharomyces pombe (strain 972 / ATCC 24843) (Fission yeast).